The sequence spans 485 residues: Adenosylhomocysteinase (485 aa).

Residues threonine 64, aspartate 139, and glutamate 205 each contribute to the substrate site. Residue 206–208 participates in NAD(+) binding; it reads TTT. 2 residues coordinate substrate: lysine 235 and aspartate 239. NAD(+) contacts are provided by residues asparagine 240, 269-274, glutamate 292, asparagine 327, 348-350, and asparagine 397; these read GYGDVG and IGH.

This sequence belongs to the adenosylhomocysteinase family. The cofactor is NAD(+).

It catalyses the reaction S-adenosyl-L-homocysteine + H2O = L-homocysteine + adenosine. Its pathway is amino-acid biosynthesis; L-homocysteine biosynthesis; L-homocysteine from S-adenosyl-L-homocysteine: step 1/1. Functionally, adenosylhomocysteine is a competitive inhibitor of S-adenosyl-L-methionine-dependent methyl transferase reactions; therefore adenosylhomocysteinase may play a key role in the control of methylations via regulation of the intracellular concentration of adenosylhomocysteine. The sequence is that of Adenosylhomocysteinase (SAHH) from Lupinus luteus (European yellow lupine).